Consider the following 393-residue polypeptide: Thyrotropin-releasing hormone receptor (393 aa).

The Extracellular portion of the chain corresponds to 1-28; that stretch reads MENDTVSEMNQTELQPQAAVALEYQVVT. Asparagine 3 and asparagine 10 each carry an N-linked (GlcNAc...) asparagine glycan. A helical membrane pass occupies residues 29–51; that stretch reads ILLVVIICGLGIVGNIMVVLVVM. At 52–61 the chain is on the cytoplasmic side; it reads RTKHMRTPTN. Residues 62–83 form a helical membrane-spanning segment; it reads CYLVSLAVADLMVLVAAGLPNI. At 84-99 the chain is on the extracellular side; that stretch reads TDSIYGSWVYGYVGCL. A disulfide bridge connects residues cysteine 98 and cysteine 179. A helical transmembrane segment spans residues 100–121; it reads CITYLQYLGINASSCSITAFTI. At 122–144 the chain is on the cytoplasmic side; that stretch reads ERYIAICHPIKAQFLCTFSRAKK. Residues 145 to 168 traverse the membrane as a helical segment; it reads IIIFVWAFTSIYCMLWFFLLDLNI. Topologically, residues 169-193 are extracellular; sequence STYKNAVVVSCGYKISRNYYSPIYL. A helical membrane pass occupies residues 194-215; it reads MDFGVFYVVPMILATVLYGFIA. The Cytoplasmic segment spans residues 216–266; sequence RILFLNPIPSDPKENSKMWKNDSIHQNKNLNLNATNRCFNSTVSSRKQVTK. A helical transmembrane segment spans residues 267 to 288; the sequence is MLAVVVILFALLWMPYRTLVVV. Topologically, residues 289–296 are extracellular; it reads NSFLSSPF. Residues 297–319 form a helical membrane-spanning segment; sequence QENWFLLFCRICIYLNSAINPVI. The Cytoplasmic segment spans residues 320-393; sequence YNLMSQKFRA…FDDTCLASEN (74 aa).

It belongs to the G-protein coupled receptor 1 family.

It is found in the cell membrane. In terms of biological role, receptor for thyrotropin-releasing hormone (TRH). Upon ligand binding, this G-protein-coupled receptor triggers activation of the phosphatidylinositol (IP3)-calcium-protein kinase C (PKC) pathway. This is Thyrotropin-releasing hormone receptor (Trhr) from Mus musculus (Mouse).